Consider the following 515-residue polypeptide: Bifunctional purine biosynthesis protein PurH (515 aa).

Residues 1 to 145 (MTKRALISVS…KNHASVTVVV (145 aa)) form the MGS-like domain.

This sequence belongs to the PurH family.

It catalyses the reaction (6R)-10-formyltetrahydrofolate + 5-amino-1-(5-phospho-beta-D-ribosyl)imidazole-4-carboxamide = 5-formamido-1-(5-phospho-D-ribosyl)imidazole-4-carboxamide + (6S)-5,6,7,8-tetrahydrofolate. The enzyme catalyses IMP + H2O = 5-formamido-1-(5-phospho-D-ribosyl)imidazole-4-carboxamide. The protein operates within purine metabolism; IMP biosynthesis via de novo pathway; 5-formamido-1-(5-phospho-D-ribosyl)imidazole-4-carboxamide from 5-amino-1-(5-phospho-D-ribosyl)imidazole-4-carboxamide (10-formyl THF route): step 1/1. It functions in the pathway purine metabolism; IMP biosynthesis via de novo pathway; IMP from 5-formamido-1-(5-phospho-D-ribosyl)imidazole-4-carboxamide: step 1/1. The chain is Bifunctional purine biosynthesis protein PurH from Streptococcus suis (strain 98HAH33).